A 327-amino-acid chain; its full sequence is Ribose 1,5-bisphosphate isomerase (327 aa).

Substrate is bound by residues 25 to 28 (RGAA) and Arg68. Catalysis depends on Cys133, which acts as the Proton acceptor. The active-site Proton donor is Asp202. Residues 212–213 (NK) and Lys238 contribute to the substrate site.

This sequence belongs to the eIF-2B alpha/beta/delta subunits family. R15P isomerase subfamily.

The catalysed reaction is alpha-D-ribose 1,5-bisphosphate = D-ribulose 1,5-bisphosphate. Its function is as follows. Isomerase involved in the non-carboxylating pentose bisphosphate pathway, a nucleoside degradation pathway present in some halophilic archaea. Catalyzes the isomerization of ribose 1,5-bisphosphate (R15P) to ribulose 1,5-bisphosphate (RuBP). The polypeptide is Ribose 1,5-bisphosphate isomerase (Haloterrigena turkmenica (strain ATCC 51198 / DSM 5511 / JCM 9101 / NCIMB 13204 / VKM B-1734 / 4k) (Halococcus turkmenicus)).